A 250-amino-acid polypeptide reads, in one-letter code: Pyrroloquinoline-quinone synthase (250 aa).

This sequence belongs to the PqqC family.

It carries out the reaction 6-(2-amino-2-carboxyethyl)-7,8-dioxo-1,2,3,4,7,8-hexahydroquinoline-2,4-dicarboxylate + 3 O2 = pyrroloquinoline quinone + 2 H2O2 + 2 H2O + H(+). The protein operates within cofactor biosynthesis; pyrroloquinoline quinone biosynthesis. In terms of biological role, ring cyclization and eight-electron oxidation of 3a-(2-amino-2-carboxyethyl)-4,5-dioxo-4,5,6,7,8,9-hexahydroquinoline-7,9-dicarboxylic-acid to PQQ. This chain is Pyrroloquinoline-quinone synthase, found in Xanthomonas euvesicatoria pv. vesicatoria (strain 85-10) (Xanthomonas campestris pv. vesicatoria).